We begin with the raw amino-acid sequence, 86 residues long: MNIFRLFNKQRTAPAARERLQVLLAHERSSAGSDLVTLLREEILAVIAKHVQLDHDKVQVTIDRNEYVSTLEIDVEIPLNAAVQAA.

The protein belongs to the MinE family.

Its function is as follows. Prevents the cell division inhibition by proteins MinC and MinD at internal division sites while permitting inhibition at polar sites. This ensures cell division at the proper site by restricting the formation of a division septum at the midpoint of the long axis of the cell. The chain is Cell division topological specificity factor from Rhizobium johnstonii (strain DSM 114642 / LMG 32736 / 3841) (Rhizobium leguminosarum bv. viciae).